A 126-amino-acid chain; its full sequence is Diadenosine hexaphosphate hydrolase (126 aa).

One can recognise a Nudix hydrolase domain in the interval 1 to 121 (MELGAGGVVF…EDLGLLEVAL (121 aa)). Substrate is bound by residues 21 to 23 (DRM) and 30 to 32 (KGH). Positions 31-52 (GHPEPGESLEEAAVREVWEETG) match the Nudix box motif. Mg(2+)-binding residues include Glu46 and Glu50. Substrate is bound by residues 66 to 68 (YVN), Arg74, and Glu112.

The protein belongs to the Nudix hydrolase family. As to quaternary structure, monomer. It depends on Mg(2+) as a cofactor.

The catalysed reaction is P(1),P(6)-bis(5'-adenosyl) hexaphosphate + H2O = 2 ATP + 2 H(+). It catalyses the reaction P(1),P(5)-bis(5'-adenosyl) pentaphosphate + H2O = ADP + ATP + 2 H(+). The enzyme catalyses P(1),P(4)-bis(5'-adenosyl) tetraphosphate + H2O = AMP + ATP + 2 H(+). Its activity is regulated as follows. Strongly inhibited by fluoride ions. Functionally, specifically hydrolyzes (di)adenosine polyphosphates but not ATP or diadenosine triphosphate, generating ATP as the product. Diadenosine hexaphosphate (Ap6A) is the preferred substrate and hydrolysis yields 2 ATP. It is the only enzyme that symmetrically hydrolyzes Ap6A. It also hydrolyzes diadenosine pentaphosphate (Ap5A), diadenosine tetraphosphate (Ap4A) and adenosine tetraphosphate (p4A). This chain is Diadenosine hexaphosphate hydrolase, found in Thermus thermophilus.